The following is a 37-amino-acid chain: Bactericidin B-3 (37 aa).

A Glycine amide modification is found at Gly-37.

This sequence belongs to the cecropin family.

The protein localises to the secreted. In terms of biological role, cecropins have lytic and antibacterial activity against several Gram-positive and Gram-negative bacteria. This is Bactericidin B-3 from Manduca sexta (Tobacco hawkmoth).